The chain runs to 220 residues: MAKNKFNTAWLHDHINDPYVKMAQREGYRARAAYKLKEIDEQDRLIRPGQVIVDLGSVPGSWSQYARNKLAKGAQRDAEREGGIDGTIIALDILPMEPIADVTFIQGDFREDTVLGQLEELVGERQVDLVISDMAPNLSGVAVADAARIEHLCDLALEFSQNHLKQDGALLVKCFHGSGYSQIVEKFKHQFKVVAARKPKASRDKSSETFILGKHLKRPA.

S-adenosyl-L-methionine contacts are provided by G60, W62, D92, D108, and D133. The active-site Proton acceptor is the K173.

The protein belongs to the class I-like SAM-binding methyltransferase superfamily. RNA methyltransferase RlmE family.

It localises to the cytoplasm. The enzyme catalyses uridine(2552) in 23S rRNA + S-adenosyl-L-methionine = 2'-O-methyluridine(2552) in 23S rRNA + S-adenosyl-L-homocysteine + H(+). Its function is as follows. Specifically methylates the uridine in position 2552 of 23S rRNA at the 2'-O position of the ribose in the fully assembled 50S ribosomal subunit. The polypeptide is Ribosomal RNA large subunit methyltransferase E (Paraburkholderia phytofirmans (strain DSM 17436 / LMG 22146 / PsJN) (Burkholderia phytofirmans)).